Consider the following 83-residue polypeptide: Large ribosomal subunit protein bL27 (83 aa).

This sequence belongs to the bacterial ribosomal protein bL27 family.

This Bifidobacterium adolescentis (strain ATCC 15703 / DSM 20083 / NCTC 11814 / E194a) protein is Large ribosomal subunit protein bL27.